The following is a 390-amino-acid chain: Probable tRNA sulfurtransferase (390 aa).

Residues 60-162 (KQIIDDLKEV…YDCAIVYGHK (103 aa)) enclose the THUMP domain. ATP-binding positions include 180 to 181 (LL), 205 to 206 (TF), R264, G286, and Q295.

Belongs to the ThiI family.

The protein localises to the cytoplasm. The enzyme catalyses [ThiI sulfur-carrier protein]-S-sulfanyl-L-cysteine + a uridine in tRNA + 2 reduced [2Fe-2S]-[ferredoxin] + ATP + H(+) = [ThiI sulfur-carrier protein]-L-cysteine + a 4-thiouridine in tRNA + 2 oxidized [2Fe-2S]-[ferredoxin] + AMP + diphosphate. It catalyses the reaction [ThiS sulfur-carrier protein]-C-terminal Gly-Gly-AMP + S-sulfanyl-L-cysteinyl-[cysteine desulfurase] + AH2 = [ThiS sulfur-carrier protein]-C-terminal-Gly-aminoethanethioate + L-cysteinyl-[cysteine desulfurase] + A + AMP + 2 H(+). The protein operates within cofactor biosynthesis; thiamine diphosphate biosynthesis. Functionally, catalyzes the ATP-dependent transfer of a sulfur to tRNA to produce 4-thiouridine in position 8 of tRNAs, which functions as a near-UV photosensor. Also catalyzes the transfer of sulfur to the sulfur carrier protein ThiS, forming ThiS-thiocarboxylate. This is a step in the synthesis of thiazole, in the thiamine biosynthesis pathway. The sulfur is donated as persulfide by IscS. This is Probable tRNA sulfurtransferase from Ureaplasma parvum serovar 3 (strain ATCC 27815 / 27 / NCTC 11736).